The sequence spans 1035 residues: Potassium-transporting ATPase alpha chain 1 (1035 aa).

Residues 1–41 (MGKADNYELYSVELGPGPGGDMAAKMSKKKKAGGGGGKRKE) are disordered. Residues 1-98 (MGKADNYELY…NALRPPRGTP (98 aa)) lie on the Cytoplasmic side of the membrane. Tyr-7 and Tyr-10 each carry phosphotyrosine. A compositionally biased stretch (basic residues) spans 26–40 (MSKKKKAGGGGGKRK). Ser-27 bears the Phosphoserine mark. The helical transmembrane segment at 99-119 (EYVKFARQLAGGLQCLMWVAA) threads the bilayer. At 120 to 142 (AICLIAFAIQASEGDLTTDDNLY) the chain is on the lumenal side. Residues 143 to 163 (LALALIAVVVVTGCFGYYQEF) traverse the membrane as a helical segment. Over 164–299 (KSTNIIASFK…NEKTPIAIEI (136 aa)) the chain is Cytoplasmic. A helical membrane pass occupies residues 300–319 (EHFVDIIAGLAILFGATFFV). Residues 320–331 (VAMCIGYTFLRA) are Lumenal-facing. Residues 332 to 349 (MVFFMAIVVAYVPEGLLA) traverse the membrane as a helical segment. Val-340, Ala-341, Val-343, and Glu-345 together coordinate K(+). The Cytoplasmic portion of the chain corresponds to 350 to 783 (TVTVCLSLTA…EQGRLIFDNL (434 aa)). The active-site 4-aspartylphosphate intermediate is Asp-387. Mg(2+) is bound by residues Asp-387 and Thr-389. Phosphoserine is present on residues Ser-463 and Ser-601. The Mg(2+) site is built by Asp-728 and Asp-732. The chain crosses the membrane as a helical span at residues 784 to 803 (KKSIAYTLTKNIPELTPYLI). Glu-797 is a binding site for K(+). Residues 804–813 (YITVSVPLPL) are Lumenal-facing. The helical transmembrane segment at 814–834 (GCITILFIELCTDIFPSVSLA) threads the bilayer. Residue Glu-822 participates in K(+) binding. The Cytoplasmic portion of the chain corresponds to 835–854 (YEKAESDIMHLRPRNPKRDR). Ser-840 carries the post-translational modification Phosphoserine. Residues 855-877 (LVNEPLAAYSYFQIGAIQSFAGF) form a helical membrane-spanning segment. At 878–929 (TDYFTAMAQEGWFPLLCVGLRPQWEDHHLQDLQDSYGQEWTFGQRLYQQYTC) the chain is on the lumenal side. The helical transmembrane segment at 930–949 (YTVFFISIEMCQIADVLIRK) threads the bilayer. Over 950-963 (TRRLSAFQQGFFRN) the chain is Cytoplasmic. Ser-954 bears the Phosphoserine; by PKA mark. The chain crosses the membrane as a helical span at residues 964–982 (RILVIAIVFQVCIGCFLCY). Residues 983–997 (CPGMPNIFNFMPIRF) lie on the Lumenal side of the membrane. A helical transmembrane segment spans residues 998-1018 (QWWLVPMPFGLLIFVYDEIRK). Residues 1019–1035 (LGVRCCPGSWWDQELYY) lie on the Cytoplasmic side of the membrane.

Belongs to the cation transport ATPase (P-type) (TC 3.A.3) family. Type IIC subfamily. The gastric H(+)/K(+) ATPase pump is composed of the catalytic alpha subunit ATP4A and the regulatory beta subunit ATP4B. Interacts (via the P-domain) with ATP4B (via N-terminus); this interaction stabilizes the lumenal-open E2 conformation state and prevents the reverse reaction of the transport cycle.

The protein resides in the apical cell membrane. It is found in the cell membrane. The enzyme catalyses K(+)(out) + ATP + H2O + H(+)(in) = K(+)(in) + ADP + phosphate + 2 H(+)(out). In terms of biological role, the catalytic subunit of the gastric H(+)/K(+) ATPase pump which transports H(+) ions in exchange for K(+) ions across the apical membrane of parietal cells. Uses ATP as an energy source to pump H(+) ions to the gastric lumen while transporting K(+) ion from the lumen into the cell. Remarkably generates a million-fold proton gradient across the gastric parietal cell membrane, acidifying the gastric juice down to pH 1. Within a transport cycle, the transfer of a H(+) ion across the membrane is coupled to ATP hydrolysis and is associated with a transient phosphorylation that shifts the pump conformation from inward-facing (E1) to outward-facing state (E2). The release of the H(+) ion in the stomach lumen is followed by binding of K(+) ion converting the pump conformation back to the E1 state. The protein is Potassium-transporting ATPase alpha chain 1 (ATP4A) of Oryctolagus cuniculus (Rabbit).